Here is a 568-residue protein sequence, read N- to C-terminus: Potassium-transporting ATPase potassium-binding subunit (568 aa).

Helical transmembrane passes span T3–G23, F64–V84, F133–I153, I179–G199, M255–Y275, L281–V301, F375–I395, I418–S438, I497–L517, and T536–V556.

Belongs to the KdpA family. The system is composed of three essential subunits: KdpA, KdpB and KdpC.

The protein localises to the cell inner membrane. Functionally, part of the high-affinity ATP-driven potassium transport (or Kdp) system, which catalyzes the hydrolysis of ATP coupled with the electrogenic transport of potassium into the cytoplasm. This subunit binds the periplasmic potassium ions and delivers the ions to the membrane domain of KdpB through an intramembrane tunnel. The sequence is that of Potassium-transporting ATPase potassium-binding subunit from Bacteroides thetaiotaomicron (strain ATCC 29148 / DSM 2079 / JCM 5827 / CCUG 10774 / NCTC 10582 / VPI-5482 / E50).